The sequence spans 217 residues: Phosphatidylcholine synthase (217 aa).

Residues 1–8 form a helical membrane-spanning segment; it reads ACIGVFSL. The Periplasmic portion of the chain corresponds to 9–16; that stretch reads VKIYQHEY. Residues 17 to 37 form a helical membrane-spanning segment; the sequence is IFALWLMFITVVIDAVDGTLA. Residues 38 to 50 are Cytoplasmic-facing; sequence RLVNIKKILPKID. The helical transmembrane segment at 51 to 71 threads the bilayer; that stretch reads GALLDNIVDYLNYVITPCFFL. Residues 72 to 77 lie on the Periplasmic side of the membrane; it reads LVKPGM. The chain crosses the membrane as a helical span at residues 78–98; the sequence is LPPEYSVFLIAAVSITSAYQF. Residues 99 to 107 are Cytoplasmic-facing; the sequence is CQCDAKTPD. Residues 108-128 traverse the membrane as a helical segment; sequence HFFKGFPCYWNITILYMFIFN. Residue Thr129 is a topological domain, periplasmic. A helical transmembrane segment spans residues 130-149; that stretch reads SAATNAIILIILSILIFVPV. Residues 150–164 lie on the Cytoplasmic side of the membrane; sequence KYVYPSRLDYLTESR. A helical membrane pass occupies residues 165–185; the sequence is ILKILMHICSIIYAVSSICIL. The Periplasmic portion of the chain corresponds to 186–191; that stretch reads ISYPNT. A helical transmembrane segment spans residues 192–212; the sequence is NIICLSLSVAYVGMYLFLSFY. Topologically, residues 213 to 217 are cytoplasmic; sequence RTYYP.

The protein belongs to the CDP-alcohol phosphatidyltransferase class-I family. It depends on Mn(2+) as a cofactor.

The protein resides in the cell inner membrane. It catalyses the reaction a CDP-1,2-diacyl-sn-glycerol + choline = a 1,2-diacyl-sn-glycero-3-phosphocholine + CMP + H(+). In terms of biological role, condenses choline with CDP-diglyceride to produce phosphatidylcholine and CMP. The polypeptide is Phosphatidylcholine synthase (Legionella bozemanae (Fluoribacter bozemanae)).